Here is an 867-residue protein sequence, read N- to C-terminus: Coiled-coil domain-containing protein 178 (867 aa).

4 coiled-coil regions span residues aspartate 153–serine 204, tryptophan 233–tyrosine 414, alanine 445–serine 470, and methionine 662–phenylalanine 696.

The polypeptide is Coiled-coil domain-containing protein 178 (CCDC178) (Homo sapiens (Human)).